We begin with the raw amino-acid sequence, 102 residues long: Polymeric immunoglobulin receptor (102 aa).

Interacts (mainly via CDR1-like domain) with dimeric IgA. Interacts (mainly via CDR2-like domain) with pentameric IgM. Either free or part of the secretory IgA (sIgA) complex that consists of two, four or five IgA monomers, and two additional non-Ig polypeptides, namely the JCHAIN and the secretory component (the proteolytic product of PIGR). Free secretory component interacts with bacterial antigens toxA of C.difficile and eaeA of E.coli. In terms of processing, N-glycosylated. N-glycosylation is required for anchoring IgA molecules to mucus, but is not necessary for Ig binding.

The protein resides in the cell membrane. Its subcellular location is the secreted. Functionally, mediates selective transcytosis of polymeric IgA and IgM across mucosal epithelial cells. Binds polymeric IgA and IgM at the basolateral surface of epithelial cells. The complex is then transported across the cell to be secreted at the apical surface. During this process, a cleavage occurs that separates the extracellular (known as the secretory component) from the transmembrane segment. Through its N-linked glycans ensures anchoring of secretory IgA (sIgA) molecules to mucus lining the epithelial surface to neutralize extracellular pathogens. On its own (free form) may act as a non-specific microbial scavenger to prevent pathogen interaction with epithelial cells. This chain is Polymeric immunoglobulin receptor (PIGR), found in Sus scrofa (Pig).